Consider the following 250-residue polypeptide: Kallikrein-14 (250 aa).

Positions 1 to 18 are cleaved as a signal peptide; the sequence is MFLLLIILQALAVAIAQS. A propeptide spans 19-23 (activation peptide); the sequence is QGDHK. The region spanning 24 to 248 is the Peptidase S1 domain; it reads IIGGYRCVRN…YHSWIQRTMQ (225 aa). A disulfide bridge links Cys-51 with Cys-67. Active-site charge relay system residues include His-66 and Asp-110. 3 disulfide bridges follow: Cys-142/Cys-209, Cys-174/Cys-188, and Cys-199/Cys-224. The active-site Charge relay system is the Ser-203.

The protein belongs to the peptidase S1 family. Kallikrein subfamily. In terms of processing, proteolytic cleavage of the activation peptide produces the active enzyme.

It localises to the secreted. Its subcellular location is the extracellular space. With respect to regulation, inhibited by SERPINA1, SERPINC1, SERPINE1, SERPINF2, aprotinin, soybean, trypsin inhibitor and leupeptin. Inhibited by serine protease inhibitor SPINK5. Has an autoproteolytic activity which may have a regulatory effect. Activated by citrate and inhibited by zinc and to a lower extent by manganese. Serine-type endopeptidase with a dual trypsin-like and chymotrypsin-like substrate specificity. May activate/inactivate the proteinase-activated receptors F2R, F2RL1 and F2RL3 and other kallikreins including KLK1, KLK3, KLK5 and KLK11. May function in seminal clot liquefaction through direct cleavage of the semenogelin SEMG1 and SEMG2 and activation of KLK3. May function through desmoglein DSG1 cleavage in epidermal desquamation a process by which the most superficial corneocytes are shed from the skin surface. May be involved in several aspects of tumor progression including growth, invasion and angiogenesis. This chain is Kallikrein-14 (Klk14), found in Mus musculus (Mouse).